The chain runs to 192 residues: LOB domain-containing protein 32 (192 aa).

The region spanning 4–105 (NRCAVCKILN…QDIESAVNEL (102 aa)) is the LOB domain.

This sequence belongs to the LOB domain-containing protein family.

This Arabidopsis thaliana (Mouse-ear cress) protein is LOB domain-containing protein 32 (LBD32).